Reading from the N-terminus, the 199-residue chain is Recombination protein RecR (199 aa).

The segment at 56-71 (CATCGNVAQEEQCNIC) adopts a C4-type zinc-finger fold. In terms of domain architecture, Toprim spans 79–174 (SVICVVEEPK…KVTRLASGLP (96 aa)).

The protein belongs to the RecR family.

May play a role in DNA repair. It seems to be involved in an RecBC-independent recombinational process of DNA repair. It may act with RecF and RecO. This Streptomyces coelicolor (strain ATCC BAA-471 / A3(2) / M145) protein is Recombination protein RecR.